The sequence spans 140 residues: uncharacterized protein (140 aa).

Positions 3-131 (RLDHIGIAVF…NGVLVELCEP (129 aa)) constitute a VOC domain. A divalent metal cation is bound by residues His6, Glu53, His77, and Glu127.

It belongs to the methylmalonyl-CoA epimerase family.

This is an uncharacterized protein from Bacillus subtilis (strain 168).